A 286-amino-acid chain; its full sequence is Glycine--tRNA ligase alpha subunit (286 aa).

It belongs to the class-II aminoacyl-tRNA synthetase family. Tetramer of two alpha and two beta subunits.

The protein resides in the cytoplasm. It carries out the reaction tRNA(Gly) + glycine + ATP = glycyl-tRNA(Gly) + AMP + diphosphate. The sequence is that of Glycine--tRNA ligase alpha subunit from Campylobacter lari (strain RM2100 / D67 / ATCC BAA-1060).